The following is a 300-amino-acid chain: Ribosomal RNA small subunit methyltransferase H (300 aa).

S-adenosyl-L-methionine contacts are provided by residues 35–37 (GGH), D55, F82, D100, and Q107.

This sequence belongs to the methyltransferase superfamily. RsmH family.

Its subcellular location is the cytoplasm. It carries out the reaction cytidine(1402) in 16S rRNA + S-adenosyl-L-methionine = N(4)-methylcytidine(1402) in 16S rRNA + S-adenosyl-L-homocysteine + H(+). Its function is as follows. Specifically methylates the N4 position of cytidine in position 1402 (C1402) of 16S rRNA. This is Ribosomal RNA small subunit methyltransferase H from Chlamydia trachomatis serovar L2 (strain ATCC VR-902B / DSM 19102 / 434/Bu).